The following is a 295-amino-acid chain: 4-hydroxybenzoate octaprenyltransferase (295 aa).

The next 8 membrane-spanning stretches (helical) occupy residues 28–48, 55–75, 103–123, 147–167, 175–195, 219–239, 241–261, and 275–295; these read PIGI…AADG, VLIF…INDF, WALF…TDPF, LPQL…FTAA, AWLI…YYAM, AIIL…GMRL, LGPY…WEFV, and FLHN…DYGI.

This sequence belongs to the UbiA prenyltransferase family. Mg(2+) serves as cofactor.

Its subcellular location is the cell inner membrane. It carries out the reaction all-trans-octaprenyl diphosphate + 4-hydroxybenzoate = 4-hydroxy-3-(all-trans-octaprenyl)benzoate + diphosphate. It participates in cofactor biosynthesis; ubiquinone biosynthesis. Functionally, catalyzes the prenylation of para-hydroxybenzoate (PHB) with an all-trans polyprenyl group. Mediates the second step in the final reaction sequence of ubiquinone-8 (UQ-8) biosynthesis, which is the condensation of the polyisoprenoid side chain with PHB, generating the first membrane-bound Q intermediate 3-octaprenyl-4-hydroxybenzoate. This is 4-hydroxybenzoate octaprenyltransferase from Azotobacter vinelandii (strain DJ / ATCC BAA-1303).